A 156-amino-acid chain; its full sequence is Arginine repressor (156 aa).

The protein belongs to the ArgR family.

The protein localises to the cytoplasm. The protein operates within amino-acid biosynthesis; L-arginine biosynthesis [regulation]. Regulates arginine biosynthesis genes. In Shewanella oneidensis (strain ATCC 700550 / JCM 31522 / CIP 106686 / LMG 19005 / NCIMB 14063 / MR-1), this protein is Arginine repressor.